A 262-amino-acid polypeptide reads, in one-letter code: Small ribosomal subunit protein eS1 (262 aa).

It belongs to the eukaryotic ribosomal protein eS1 family. As to quaternary structure, component of the small ribosomal subunit. Mature ribosomes consist of a small (40S) and a large (60S) subunit. The 40S subunit contains about 32 different proteins and 1 molecule of RNA (18S). The 60S subunit contains about 42 different proteins and 3 molecules of RNA (28S, 5.8S and 5S).

It localises to the cytoplasm. In terms of biological role, component of the ribosome, a large ribonucleoprotein complex responsible for the synthesis of proteins in the cell. The small ribosomal subunit (SSU) binds messenger RNAs (mRNAs) and translates the encoded message by selecting cognate aminoacyl-transfer RNA (tRNA) molecules. The large subunit (LSU) contains the ribosomal catalytic site termed the peptidyl transferase center (PTC), which catalyzes the formation of peptide bonds, thereby polymerizing the amino acids delivered by tRNAs into a polypeptide chain. The nascent polypeptides leave the ribosome through a tunnel in the LSU and interact with protein factors that function in enzymatic processing, targeting, and the membrane insertion of nascent chains at the exit of the ribosomal tunnel. The chain is Small ribosomal subunit protein eS1 from Plasmodium falciparum (isolate 3D7).